The chain runs to 51 residues: Sperm protamine P1 (51 aa).

2 cysteine pairs are disulfide-bonded: Cys7-Cys15 and Cys38-Cys48.

Belongs to the protamine P1 family. As to quaternary structure, cross-linked by interchain disulfide bonds around the DNA-helix. In terms of processing, phosphorylated by SRPK1. Testis.

Its subcellular location is the nucleus. It localises to the chromosome. Protamines substitute for histones in the chromatin of sperm during the haploid phase of spermatogenesis. They compact sperm DNA into a highly condensed, stable and inactive complex. The polypeptide is Sperm protamine P1 (Prm1) (Mus musculus (Mouse)).